We begin with the raw amino-acid sequence, 361 residues long: 3,6-anhydro-alpha-L-galactonate cycloisomerase (361 aa).

K166 (proton acceptor) is an active-site residue. 3 residues coordinate Mg(2+): D195, E221, and E247. H297 (proton donor/acceptor) is an active-site residue.

It belongs to the mandelate racemase/muconate lactonizing enzyme family. The cofactor is Mg(2+).

It catalyses the reaction 3,6-anhydro-L-galactonate = 2-dehydro-3-deoxy-L-galactonate. Its function is as follows. Involved in the degradation of 3,6-anhydro-L-galactose, which is the major monomeric sugar of red macroalgae. Catalyzes the isomerization of 3,6-anhydrogalactonate (AHGA) to 2-keto-3-deoxy-galactonate (KDGal). The protein is 3,6-anhydro-alpha-L-galactonate cycloisomerase of Streptomyces coelicolor (strain ATCC BAA-471 / A3(2) / M145).